Here is a 250-residue protein sequence, read N- to C-terminus: Recombination protein RecR (250 aa).

Residues 56–71 form a C4-type zinc finger; that stretch reads CRICHNISQEDVCRIC. The 149-residue stretch at 79–227 folds into the Toprim domain; the sequence is SIICVVEESK…TVTRLASGIP (149 aa). Positions 148 to 172 are disordered; that stretch reads LGDADTPADGESSGADAAETGNAKT.

Belongs to the RecR family.

May play a role in DNA repair. It seems to be involved in an RecBC-independent recombinational process of DNA repair. It may act with RecF and RecO. This Corynebacterium jeikeium (strain K411) protein is Recombination protein RecR.